The sequence spans 337 residues: Trace amine-associated receptor 5 (337 aa).

Residues 1 to 38 (MRAVLLPGSGEQPAAFCYQVNGSCPRTVHPLAIRVLIY) are Extracellular-facing. An N-linked (GlcNAc...) asparagine glycan is attached at asparagine 21. Intrachain disulfides connect cysteine 24-cysteine 188 and cysteine 99-cysteine 192. The helical transmembrane segment at 39–59 (LACAVGMLITVLGNLFVVFAV) threads the bilayer. Over 60 to 70 (SYFKVLHTPTN) the chain is Cytoplasmic. Residues 71–91 (FLLLSLALADMLLGLLVLPLS) form a helical membrane-spanning segment. The Extracellular portion of the chain corresponds to 92–109 (TVRSVESCWFFGDFLCRL). The chain crosses the membrane as a helical span at residues 110–130 (HTYLDTLFCLTSIFHLCFISI). The Cytoplasmic segment spans residues 131–154 (DRHCAICDPLLYPSKFTVRIALRY). The chain crosses the membrane as a helical span at residues 155 to 175 (IAAGWGIPAAYTAFFLYTDVV). Positions 176–189 (ERALSQWLEEMPCV) are extracellular Loop 2 (ECL2). The Extracellular segment spans residues 176–204 (ERALSQWLEEMPCVGSCQLLFNKFWGWLN). Residues 205-225 (FPAFFIPCLIMISLYLKIFVV) traverse the membrane as a helical segment. Over 226-253 (ATRQAQQIRTLSQSLSGAVKRERKAAKT) the chain is Cytoplasmic. A helical transmembrane segment spans residues 254–274 (LGIAVGIYLVCWLPFTVDTLV). At 275 to 284 (DSLLNFVTPP) the chain is on the extracellular side. Residues 285–307 (LVFDIFIWFAYFNSACNPIIYVF) traverse the membrane as a helical segment. The Cytoplasmic portion of the chain corresponds to 308-337 (SYRWFRKALKLLLSREILSPRTQTADLFHD).

The protein belongs to the G-protein coupled receptor 1 family.

It localises to the cell membrane. Olfactory receptor specific for trimethylamine, a trace amine enriched in the urine of male rats, playing a role in social behavior. Also activated by N-methylpiperidine. Trimethylamine is present at high concentration in the urine of male after puberty and acts as an attractant. Trimethylamine-binding causes a conformation change that triggers signaling via G(s)-class of G alpha proteins (GNAL or GNAS). Also required to provide olfactory input into limbic brain areas to regulate emotional behaviors likely via modulation of the serotonin system. The sequence is that of Trace amine-associated receptor 5 from Rattus norvegicus (Rat).